Consider the following 429-residue polypeptide: UDP-N-acetylglucosamine 1-carboxyvinyltransferase (429 aa).

Residue 22-23 (KN) participates in phosphoenolpyruvate binding. Position 102 (Arg102) interacts with UDP-N-acetyl-alpha-D-glucosamine. Catalysis depends on Cys126, which acts as the Proton donor. Position 126 is a 2-(S-cysteinyl)pyruvic acid O-phosphothioketal (Cys126). UDP-N-acetyl-alpha-D-glucosamine contacts are provided by residues 171–174 (KVSV), Asp316, and Ile338.

This sequence belongs to the EPSP synthase family. MurA subfamily.

It localises to the cytoplasm. It catalyses the reaction phosphoenolpyruvate + UDP-N-acetyl-alpha-D-glucosamine = UDP-N-acetyl-3-O-(1-carboxyvinyl)-alpha-D-glucosamine + phosphate. It participates in cell wall biogenesis; peptidoglycan biosynthesis. Cell wall formation. Adds enolpyruvyl to UDP-N-acetylglucosamine. This Xanthobacter autotrophicus (strain ATCC BAA-1158 / Py2) protein is UDP-N-acetylglucosamine 1-carboxyvinyltransferase.